We begin with the raw amino-acid sequence, 63 residues long: Odorranain-B1 (63 aa).

The first 22 residues, 1–22 (MFTTKKPLLLLFFLGIISLSVC), serve as a signal peptide directing secretion. Residues 23-41 (EQERDADEEDGGEVTEEEV) constitute a propeptide that is removed on maturation.

The protein belongs to the frog skin active peptide (FSAP) family. Brevinin subfamily. Expressed by the skin glands.

It localises to the secreted. This Odorrana hainanensis (Odor frog) protein is Odorranain-B1.